Reading from the N-terminus, the 1496-residue chain is DNA-directed RNA polymerase subunit beta' (1496 aa).

Positions 67, 69, 82, and 85 each coordinate Zn(2+). The Mg(2+) site is built by aspartate 499, aspartate 501, and aspartate 503. Residues cysteine 867, cysteine 943, cysteine 950, and cysteine 953 each contribute to the Zn(2+) site.

The protein belongs to the RNA polymerase beta' chain family. As to quaternary structure, the RNAP catalytic core consists of 2 alpha, 1 beta, 1 beta' and 1 omega subunit. When a sigma factor is associated with the core the holoenzyme is formed, which can initiate transcription. The cofactor is Mg(2+). Zn(2+) serves as cofactor.

It carries out the reaction RNA(n) + a ribonucleoside 5'-triphosphate = RNA(n+1) + diphosphate. Its function is as follows. DNA-dependent RNA polymerase catalyzes the transcription of DNA into RNA using the four ribonucleoside triphosphates as substrates. The sequence is that of DNA-directed RNA polymerase subunit beta' from Chlorobium limicola (strain DSM 245 / NBRC 103803 / 6330).